Reading from the N-terminus, the 918-residue chain is UPF0182 protein CPF_0011 (918 aa).

The next 7 helical transmembrane spans lie at 8–28 (TVLI…NFII), 46–66 (LIAI…VIAI), 91–111 (FLLS…TTQW), 151–171 (AISL…ALGF), 200–220 (LAVL…LKSY), 243–263 (IFYK…FISI), and 271–291 (IIIS…VAIF). Positions 857–869 (EENKNSNKDETPK) are enriched in basic and acidic residues. A disordered region spans residues 857 to 876 (EENKNSNKDETPKNEITSDN).

This sequence belongs to the UPF0182 family.

It is found in the cell membrane. In Clostridium perfringens (strain ATCC 13124 / DSM 756 / JCM 1290 / NCIMB 6125 / NCTC 8237 / Type A), this protein is UPF0182 protein CPF_0011.